Here is a 488-residue protein sequence, read N- to C-terminus: Probable (S)-N-methylcoclaurine 3'-hydroxylase isozyme 2 (488 aa).

Residues 2–21 (EVLSIAIVSFSFLLFLFFIL) form a helical membrane-spanning segment. Position 427 (C427) interacts with heme.

The protein belongs to the cytochrome P450 family. Heme serves as cofactor. In terms of tissue distribution, expressed at low levels in roots.

It is found in the endoplasmic reticulum membrane. Its subcellular location is the microsome membrane. The enzyme catalyses (S)-N-methylcoclaurine + reduced [NADPH--hemoprotein reductase] + O2 = (S)-3'-hydroxy-N-methylcoclaurine + oxidized [NADPH--hemoprotein reductase] + H2O + H(+). It participates in alkaloid biosynthesis; (S)-reticuline biosynthesis; (S)-reticuline from (S)-norcoclaurine: step 3/4. Its function is as follows. 3'-hydroxylation of (S)-N-methylcoclaurine. The protein is Probable (S)-N-methylcoclaurine 3'-hydroxylase isozyme 2 (CYP80B2) of Coptis japonica (Japanese goldthread).